The chain runs to 1187 residues: RNA helicase Mov10l1 (1187 aa).

A disordered region spans residues 273 to 347 (RSKSCPGAAA…EPEPGGLIPP (75 aa)). 2 stretches are compositionally biased toward basic and acidic residues: residues 296 to 307 (HHREDKTDEIPE) and 322 to 339 (ACKE…KQEP). 5 repeat units span residues 642-652 (TRNDSQSITNI), 653-663 (IRNDGQSITNV), 664-674 (TRNDGQPITKV), 675-685 (TRNNSQSITNI), and 686-696 (TRNDGQPITKN). The interval 642–696 (TRNDSQSITNIIRNDGQSITNVTRNDGQPITKVTRNNSQSITNITRNDGQPITKN) is 5 X 11 AA tandem repeats of [TI]-R-N-[DN]-[GS]-Q-[SP]-I-T-[NK]-[IVN]. The disordered stretch occupies residues 686–727 (TRNDGQPITKNKKTVKDQTKHTTEERHVGTTDQPEKASSTAE). Basic and acidic residues predominate over residues 699 to 720 (TVKDQTKHTTEERHVGTTDQPE). Residue 772 to 779 (GPPGTGKT) participates in ATP binding. The DEAG box signature appears at 888-891 (DEAG).

Belongs to the DNA2/NAM7 helicase family. SDE3 subfamily. Interacts with PIWIL1. Interacts with PIWIL2. Interacts with PIWIL4. Interacts with HSPA2. Interacts with PLD6. Isoform 1: Specifically expressed in testis. Isoform 1: In testis, present in pachytene spermatocytes but absent in postmeiotic spermatids (at protein level). Isoform 2: Present in cardiomyocytes (at protein level). Isoform 2: Heart specific. Isoform 3: Heart specific and is specifically expressed in cardiac myocytes.

The protein resides in the cytoplasm. The enzyme catalyses ATP + H2O = ADP + phosphate + H(+). In terms of biological role, ATP-dependent RNA helicase required during spermatogenesis to repress transposable elements and prevent their mobilization, which is essential for germline integrity. Acts via the piRNA metabolic process, which mediates the repression of transposable elements during meiosis by forming complexes composed of piRNAs and Piwi proteins and governs the methylation and subsequent repression of transposons. Involved in the primary piRNA metabolic process. Specifically binds to piRNA precursors and promotes the generation of intermediate piRNA processing fragments that are subsequently loaded to Piwi proteins. Acts via its ATP-dependent RNA helicase activity: displays 5'-3' RNA unwinding activity and probably mediates unwinding and funneling of single-stranded piRNA precursor transcripts to the endonuclease that catalyzes the first cleavage step of piRNA processing to generate piRNA intermediate fragments that are subsequently loaded to Piwi proteins. May act downstream of MEF2C during heart formation. Acts as a cardiac-specific suppressor of cardiomyocyte hypertrophy and cell cycle progression, suggesting that it may suppress these processes through the regulation of CDKN1A. Such results however require additional evidence. The sequence is that of RNA helicase Mov10l1 from Mus musculus (Mouse).